The following is a 714-amino-acid chain: Polyribonucleotide nucleotidyltransferase (714 aa).

2 residues coordinate Mg(2+): aspartate 488 and aspartate 494. The region spanning 555 to 614 (PRIEVMNIPTDKIRDVIGSGGKVIREIVEKTGAKINIEDDGTVKIASSNGKEIEAAKKWI) is the KH domain. The S1 motif domain occupies 624–692 (GEIYEGTVVK…ERGKVRLSMK (69 aa)).

Belongs to the polyribonucleotide nucleotidyltransferase family. Mg(2+) serves as cofactor.

It localises to the cytoplasm. It carries out the reaction RNA(n+1) + phosphate = RNA(n) + a ribonucleoside 5'-diphosphate. Functionally, involved in mRNA degradation. Catalyzes the phosphorolysis of single-stranded polyribonucleotides processively in the 3'- to 5'-direction. The chain is Polyribonucleotide nucleotidyltransferase from Brucella suis biovar 1 (strain 1330).